The primary structure comprises 149 residues: Cytochrome c' (149 aa).

The N-terminal stretch at 1 to 19 (MRRVLLATLMAALPAAAMA) is a signal peptide. Arg-29, Thr-89, Ala-90, Cys-138, Cys-141, and His-142 together coordinate heme c.

Monomer and homodimer. Binds 1 heme c group covalently per subunit.

Its function is as follows. Cytochrome c' is the most widely occurring bacterial c-type cytochrome. Cytochromes c' are high-spin proteins and the heme has no sixth ligand. Their exact function is not known. The sequence is that of Cytochrome c' (cycP) from Cereibacter sphaeroides (strain ATCC 17023 / DSM 158 / JCM 6121 / CCUG 31486 / LMG 2827 / NBRC 12203 / NCIMB 8253 / ATH 2.4.1.) (Rhodobacter sphaeroides).